The primary structure comprises 549 residues: DNA ligase 1 (549 aa).

Glutamate 212 serves as a coordination point for ATP. Lysine 214 acts as the N6-AMP-lysine intermediate in catalysis. Arginine 219, arginine 234, glutamate 264, phenylalanine 310, arginine 387, and lysine 393 together coordinate ATP.

This sequence belongs to the ATP-dependent DNA ligase family. Mg(2+) is required as a cofactor.

It carries out the reaction ATP + (deoxyribonucleotide)n-3'-hydroxyl + 5'-phospho-(deoxyribonucleotide)m = (deoxyribonucleotide)n+m + AMP + diphosphate.. In terms of biological role, DNA ligase that seals nicks in double-stranded DNA during DNA replication, DNA recombination and DNA repair. This is DNA ligase 1 from Methanosarcina barkeri (strain Fusaro / DSM 804).